A 4328-amino-acid chain; its full sequence is Cadherin-4 (4328 aa).

The signal sequence occupies residues Met1–Thr23. Residues Ser24–Glu4072 lie on the Extracellular side of the membrane. N-linked (GlcNAc...) asparagine glycans are attached at residues Asn39 and Asn56. Cadherin domains lie at Pro108–Phe153 and Gly156–Ile275. Residues Asn196, Asn330, Asn339, Asn365, Asn431, Asn452, and Asn584 are each glycosylated (N-linked (GlcNAc...) asparagine). Cadherin domains lie at Asp384 to Phe492, Pro507 to Phe608, Ser609 to Phe720, Asp721 to Cys826, Val827 to Phe934, Asp935 to Tyr1051, Lys1047 to Phe1156, Arg1175 to Ile1262, Lys1265 to Phe1363, Ser1364 to Phe1467, and Val1476 to Thr1570. Residues Asn811 and Asn899 are each glycosylated (N-linked (GlcNAc...) asparagine). The short motif at Arg1090–Asp1092 is the Cell attachment site element. N-linked (GlcNAc...) asparagine glycosylation occurs at Asn1192. A disordered region spans residues Asn1246–Ser1267. Asn1335 is a glycosylation site (N-linked (GlcNAc...) asparagine). Asn1610 carries an N-linked (GlcNAc...) asparagine glycan. Residues Arg1671–Phe1784 enclose the Cadherin 14 domain. N-linked (GlcNAc...) asparagine glycosylation occurs at Asn1895. In terms of domain architecture, Cadherin 15 spans Phe1917–Phe1984. Residues Asn2059, Asn2150, Asn2216, Asn2367, Asn2413, Asn2440, and Asn2535 are each glycosylated (N-linked (GlcNAc...) asparagine). Cadherin domains follow at residues Glu2187 to Phe2285 and Ile2286 to Phe2397. Cadherin domains are found at residues Leu2429–Phe2505, Val2506–Phe2608, Ser2609–Phe2712, Phe2719–Phe2813, Ser2828–Ala2915, Pro2913–Ile3011, Ile3012–Phe3113, Glu3114–Phe3216, and Glu3217–Phe3326. N-linked (GlcNAc...) asparagine glycans are attached at residues Asn2844, Asn2916, Asn2941, Asn3083, and Asn3143. A glycan (N-linked (GlcNAc...) asparagine) is linked at Asn3330. Cadherin domains lie at Val3335 to Met3428 and Lys3429 to Phe3554. A glycan (N-linked (GlcNAc...) asparagine) is linked at Asn3512. The region spanning Glu3706–Ser3744 is the EGF-like 1 domain. 10 disulfides stabilise this stretch: Cys3710–Cys3721, Cys3715–Cys3732, Cys3734–Cys3743, Cys3898–Cys3925, Cys3933–Cys3944, Cys3938–Cys3954, Cys3956–Cys3965, Cys3972–Cys3983, Cys3977–Cys3992, and Cys3994–Cys4003. Asn3727 carries N-linked (GlcNAc...) asparagine glycosylation. Positions Glu3757–Cys3925 constitute a Laminin G-like domain. 2 EGF-like domains span residues Thr3929 to Glu3966 and Asp3968 to Glu4004. N-linked (GlcNAc...) asparagine glycosylation is present at Asn4043. The helical transmembrane segment at Ile4073–Thr4093 threads the bilayer. Residues Trp4094–Ser4328 lie on the Cytoplasmic side of the membrane. Disordered regions lie at residues Thr4143–Arg4215 and Asn4268–Leu4311. Basic and acidic residues predominate over residues Thr4178–Asn4196. Positions Arg4207–Asp4209 match the Cell attachment site motif.

In larvae and adult, it is expressed in various tissues including pharyngeal muscle, hypodermis and gonad. In the nervous system it is expressed in sensory neurons and motor neurons in the ventral cord.

The protein localises to the cell membrane. Functionally, potential calcium-dependent cell-adhesion protein that controls axon guidance in the ventral cord. The polypeptide is Cadherin-4 (Caenorhabditis elegans).